The chain runs to 174 residues: Transcription factor bHLH36 (174 aa).

Positions 1–53 (MEKMMHRETERQRRQEMASLYASLRSLLPLHFIKGKRSTSDQVNEAVNYIKYL) constitute a bHLH domain.

In terms of assembly, homodimer. As to expression, expressed constitutively in roots, leaves, stems, and flowers.

It localises to the nucleus. This Arabidopsis thaliana (Mouse-ear cress) protein is Transcription factor bHLH36 (BHLH36).